The chain runs to 120 residues: uncharacterized protein (120 aa).

The helical transmembrane segment at 8-28 (LIVKWFVGLMLIMMMVAVSLF) threads the bilayer.

Its subcellular location is the membrane. This is an uncharacterized protein from Bacillus anthracis.